The primary structure comprises 329 residues: Diaminopimelate epimerase (329 aa).

Substrate is bound by residues asparagine 14 and asparagine 73. Catalysis depends on cysteine 82, which acts as the Proton donor. Residues 83–84 (GN), asparagine 170, asparagine 206, and 224–225 (ER) each bind substrate. The active-site Proton acceptor is cysteine 233. A substrate-binding site is contributed by 234 to 235 (GT).

This sequence belongs to the diaminopimelate epimerase family. Homodimer.

It is found in the cytoplasm. It catalyses the reaction (2S,6S)-2,6-diaminopimelate = meso-2,6-diaminopimelate. The protein operates within amino-acid biosynthesis; L-lysine biosynthesis via DAP pathway; DL-2,6-diaminopimelate from LL-2,6-diaminopimelate: step 1/1. Catalyzes the stereoinversion of LL-2,6-diaminopimelate (L,L-DAP) to meso-diaminopimelate (meso-DAP), a precursor of L-lysine and an essential component of the bacterial peptidoglycan. The protein is Diaminopimelate epimerase of Listeria monocytogenes serotype 4b (strain F2365).